Consider the following 506-residue polypeptide: MPASSLDELVALCKRRGFIFQSSEIYGGLQGVYDYGPLGVELKNNLKQAWWRRNVYERDDMEGLDASVLTHRLVLHYSGHEATFADPMVDNRITKKRYRLDHLLKEQPEEVLKRLYRAMEVEEGNLHALVQAMMQAPERAGGAMTAAGVLDPASGEPGDWTPPRYFNMMFKTYVGPVEDEAALAYLRPETAQGIFVNFKNVLDATSRKLPFGIAQIGKAFRNEITPRNFIFRVREFEQMEIEYFVRPGEDEYWHRYWVEERLKWWQEMGLSRENLVPYEQPPEELAHYAKATVDILYRFPHGLEELEGIANRTDFDLGSHTKDQEALGITARVLRNEHSTQRLAYRDPETGKWFVPYVIEPSAGVDRGVLALLAEAFTREELPNGEERIVLKLKPQLAPIKVAVIPLVKNRPEITEYAKRLKARLLALGLGRVLYEDTGNIGKAYRRHDEVGTPFAVTVDYDTIGQSKDGTTRLKDTVTVRDRDTMEQIRLHVDELEGFLRERLKW.

Arginine 99 and glutamate 189 together coordinate substrate. ATP-binding positions include 221–223 (RNE), 231–236 (FRVREF), 305–306 (EL), and 364–367 (GVDR). A substrate-binding site is contributed by 236–240 (FEQME). 360–364 (EPSAG) is a substrate binding site.

The protein belongs to the class-II aminoacyl-tRNA synthetase family. In terms of assembly, homodimer.

It localises to the cytoplasm. It catalyses the reaction tRNA(Gly) + glycine + ATP = glycyl-tRNA(Gly) + AMP + diphosphate. Its function is as follows. Catalyzes the attachment of glycine to tRNA(Gly). The protein is Glycine--tRNA ligase of Thermus thermophilus (strain ATCC BAA-163 / DSM 7039 / HB27).